We begin with the raw amino-acid sequence, 615 residues long: UvrABC system protein C (615 aa).

In terms of domain architecture, GIY-YIG spans glutamate 12 to valine 91. Residues aspartate 203 to threonine 238 enclose the UVR domain.

This sequence belongs to the UvrC family. Interacts with UvrB in an incision complex.

It is found in the cytoplasm. Its function is as follows. The UvrABC repair system catalyzes the recognition and processing of DNA lesions. UvrC both incises the 5' and 3' sides of the lesion. The N-terminal half is responsible for the 3' incision and the C-terminal half is responsible for the 5' incision. This is UvrABC system protein C from Thermoanaerobacter pseudethanolicus (strain ATCC 33223 / 39E) (Clostridium thermohydrosulfuricum).